A 173-amino-acid chain; its full sequence is CASP-like protein 3A1 (173 aa).

Residue Met-1 is a topological domain, cytoplasmic. The chain crosses the membrane as a helical span at residues 2–22; the sequence is VDIALRSAVVAFMVVSLSAMF. Topologically, residues 23–48 are extracellular; it reads TSTQHSEVHIIGFSIPVSLRWNRSQP. N-linked (GlcNAc...) asparagine glycosylation is present at Asn-44. The helical transmembrane segment at 49-69 threads the bilayer; the sequence is FEFLVVVELLICAYAFVQFVY. At 70–84 the chain is on the cytoplasmic side; the sequence is QSVVLAKNAVPTRRC. A helical membrane pass occupies residues 85–105; that stretch reads IWVQLAADQVCAYLVLAAAAA. Over 106–140 the chain is Extracellular; sequence AAGASRTNKSGFQSLGMQNIKVPGVCIVLDKFCNR. A glycan (N-linked (GlcNAc...) asparagine) is linked at Asn-113. Residues 141-161 form a helical membrane-spanning segment; the sequence is ATIAIIFTLLAAGASGISVTL. The Cytoplasmic portion of the chain corresponds to 162-173; that stretch reads DVYMLTLTYYMG.

The protein belongs to the Casparian strip membrane proteins (CASP) family. As to quaternary structure, homodimer and heterodimers.

Its subcellular location is the cell membrane. This is CASP-like protein 3A1 from Pteridium aquilinum subsp. aquilinum (Bracken fern).